Here is a 157-residue protein sequence, read N- to C-terminus: UPF0262 protein RL0614 (157 aa).

This sequence belongs to the UPF0262 family.

This is UPF0262 protein RL0614 from Rhizobium johnstonii (strain DSM 114642 / LMG 32736 / 3841) (Rhizobium leguminosarum bv. viciae).